The following is a 311-amino-acid chain: Methionyl-tRNA formyltransferase (311 aa).

110–113 contacts (6S)-5,6,7,8-tetrahydrofolate; the sequence is SLLP.

It belongs to the Fmt family.

It catalyses the reaction L-methionyl-tRNA(fMet) + (6R)-10-formyltetrahydrofolate = N-formyl-L-methionyl-tRNA(fMet) + (6S)-5,6,7,8-tetrahydrofolate + H(+). Functionally, attaches a formyl group to the free amino group of methionyl-tRNA(fMet). The formyl group appears to play a dual role in the initiator identity of N-formylmethionyl-tRNA by promoting its recognition by IF2 and preventing the misappropriation of this tRNA by the elongation apparatus. This is Methionyl-tRNA formyltransferase from Streptococcus uberis (strain ATCC BAA-854 / 0140J).